The sequence spans 778 residues: Endonuclease MutS2 (778 aa).

328–335 contacts ATP; that stretch reads GPNTGGKT. A Smr domain is found at 702-777; that stretch reads LDLRGKRYEE…GSGATIVTFK (76 aa).

The protein belongs to the DNA mismatch repair MutS family. MutS2 subfamily. In terms of assembly, homodimer. Binds to stalled ribosomes, contacting rRNA.

In terms of biological role, endonuclease that is involved in the suppression of homologous recombination and thus may have a key role in the control of bacterial genetic diversity. Acts as a ribosome collision sensor, splitting the ribosome into its 2 subunits. Detects stalled/collided 70S ribosomes which it binds and splits by an ATP-hydrolysis driven conformational change. Acts upstream of the ribosome quality control system (RQC), a ribosome-associated complex that mediates the extraction of incompletely synthesized nascent chains from stalled ribosomes and their subsequent degradation. Probably generates substrates for RQC. This is Endonuclease MutS2 from Streptococcus pneumoniae (strain JJA).